The primary structure comprises 364 residues: UDP-N-acetylglucosamine--N-acetylmuramyl-(pentapeptide) pyrophosphoryl-undecaprenol N-acetylglucosamine transferase (364 aa).

UDP-N-acetyl-alpha-D-glucosamine contacts are provided by residues 10–12 (TGG), asparagine 124, arginine 166, serine 196, isoleucine 252, and glutamine 297.

Belongs to the glycosyltransferase 28 family. MurG subfamily.

Its subcellular location is the cell membrane. The enzyme catalyses di-trans,octa-cis-undecaprenyl diphospho-N-acetyl-alpha-D-muramoyl-L-alanyl-D-glutamyl-meso-2,6-diaminopimeloyl-D-alanyl-D-alanine + UDP-N-acetyl-alpha-D-glucosamine = di-trans,octa-cis-undecaprenyl diphospho-[N-acetyl-alpha-D-glucosaminyl-(1-&gt;4)]-N-acetyl-alpha-D-muramoyl-L-alanyl-D-glutamyl-meso-2,6-diaminopimeloyl-D-alanyl-D-alanine + UDP + H(+). It participates in cell wall biogenesis; peptidoglycan biosynthesis. Its function is as follows. Cell wall formation. Catalyzes the transfer of a GlcNAc subunit on undecaprenyl-pyrophosphoryl-MurNAc-pentapeptide (lipid intermediate I) to form undecaprenyl-pyrophosphoryl-MurNAc-(pentapeptide)GlcNAc (lipid intermediate II). This is UDP-N-acetylglucosamine--N-acetylmuramyl-(pentapeptide) pyrophosphoryl-undecaprenol N-acetylglucosamine transferase from Ruminiclostridium cellulolyticum (strain ATCC 35319 / DSM 5812 / JCM 6584 / H10) (Clostridium cellulolyticum).